A 550-amino-acid polypeptide reads, in one-letter code: Centrosomal and chromosomal factor (550 aa).

Coiled-coil stretches lie at residues 20–44 (SALS…QQHH), 105–126 (VANS…QQQQ), and 239–274 (ATSA…QQAH). Disordered regions lie at residues 21 to 145 (ALSA…KDYS), 208 to 320 (LSSG…HAAN), 361 to 380 (SHYA…RDAM), and 392 to 465 (SGKL…SASV). Low complexity-rich tracts occupy residues 24–71 (ALQQ…QQQQ), 81–136 (ANTS…NAAP), and 221–320 (AAVA…HAAN). 2 stretches are compositionally biased toward low complexity: residues 396-412 (QQSQ…QQHC) and 450-462 (SATP…SGGS).

As to quaternary structure, homodimer. Interacts with esc, Trl, E(z), scm and ph-p in vitro. Found in vivo in an esc-containing complex, which may be the Esc/E(z) complex. Also found in vivo in a Pc-containing complex that may be the PRC1 complex, but does not interact with Pc directly. Interacts with cyclin CycG.

The protein resides in the nucleus. The protein localises to the cytoplasm. It is found in the cytoskeleton. It localises to the microtubule organizing center. Its subcellular location is the centrosome. The protein resides in the chromosome. Essential protein required for proper condensation of mitotic chromosomes and progression through mitosis. Binds to specific polytene chromosome sites, many of which are shared with the posterior sex combs (Psc) protein. Involved in maintaining Abd-B repression outside its normal expression domain. This chain is Centrosomal and chromosomal factor (corto), found in Drosophila melanogaster (Fruit fly).